The chain runs to 215 residues: Probable phosphoglycerate mutase GpmB (215 aa).

Residues 8-15 (RHGETQWN), 21-22 (QG), R58, R60, 82-85 (ELNM), 104-105 (RR), and 151-152 (GI) contribute to the substrate site. Catalysis depends on H9, which acts as the Tele-phosphohistidine intermediate. Catalysis depends on E82, which acts as the Proton donor/acceptor.

It belongs to the phosphoglycerate mutase family. GpmB subfamily.

It catalyses the reaction (2R)-2-phosphoglycerate = (2R)-3-phosphoglycerate. The protein operates within carbohydrate degradation; glycolysis; pyruvate from D-glyceraldehyde 3-phosphate: step 3/5. This chain is Probable phosphoglycerate mutase GpmB, found in Escherichia fergusonii (strain ATCC 35469 / DSM 13698 / CCUG 18766 / IAM 14443 / JCM 21226 / LMG 7866 / NBRC 102419 / NCTC 12128 / CDC 0568-73).